The primary structure comprises 130 residues: Small ribosomal subunit protein uS8 (130 aa).

The protein belongs to the universal ribosomal protein uS8 family. As to quaternary structure, part of the 30S ribosomal subunit.

Its function is as follows. One of the primary rRNA binding proteins, it binds directly to 16S rRNA central domain where it helps coordinate assembly of the platform of the 30S subunit. The sequence is that of Small ribosomal subunit protein uS8 from Methanobrevibacter smithii (strain ATCC 35061 / DSM 861 / OCM 144 / PS).